The sequence spans 1293 residues: Phosphoribosylformylglycinamidine synthase (1293 aa).

ATP-binding positions include glycine 305–aspartate 316 and alanine 676. The interval glycine 305 to lysine 327 is disordered. Aspartate 677, glutamate 716, asparagine 720, and aspartate 884 together coordinate Mg(2+). Residue serine 886 coordinates ATP. One can recognise a Glutamine amidotransferase type-1 domain in the interval methionine 1040–glycine 1293. Residue cysteine 1133 is the Nucleophile of the active site. Residues histidine 1258 and glutamate 1260 contribute to the active site.

It in the N-terminal section; belongs to the FGAMS family. In terms of assembly, monomer.

It localises to the cytoplasm. It carries out the reaction N(2)-formyl-N(1)-(5-phospho-beta-D-ribosyl)glycinamide + L-glutamine + ATP + H2O = 2-formamido-N(1)-(5-O-phospho-beta-D-ribosyl)acetamidine + L-glutamate + ADP + phosphate + H(+). It functions in the pathway purine metabolism; IMP biosynthesis via de novo pathway; 5-amino-1-(5-phospho-D-ribosyl)imidazole from N(2)-formyl-N(1)-(5-phospho-D-ribosyl)glycinamide: step 1/2. In terms of biological role, phosphoribosylformylglycinamidine synthase involved in the purines biosynthetic pathway. Catalyzes the ATP-dependent conversion of formylglycinamide ribonucleotide (FGAR) and glutamine to yield formylglycinamidine ribonucleotide (FGAM) and glutamate. The sequence is that of Phosphoribosylformylglycinamidine synthase from Shewanella sp. (strain MR-4).